The chain runs to 209 residues: Probable nicotinate-nucleotide adenylyltransferase (209 aa).

This sequence belongs to the NadD family.

The enzyme catalyses nicotinate beta-D-ribonucleotide + ATP + H(+) = deamido-NAD(+) + diphosphate. It participates in cofactor biosynthesis; NAD(+) biosynthesis; deamido-NAD(+) from nicotinate D-ribonucleotide: step 1/1. Functionally, catalyzes the reversible adenylation of nicotinate mononucleotide (NaMN) to nicotinic acid adenine dinucleotide (NaAD). This chain is Probable nicotinate-nucleotide adenylyltransferase, found in Hydrogenovibrio crunogenus (strain DSM 25203 / XCL-2) (Thiomicrospira crunogena).